The primary structure comprises 157 residues: Endoribonuclease YbeY (157 aa).

Zn(2+) is bound by residues histidine 118, histidine 122, and histidine 128.

This sequence belongs to the endoribonuclease YbeY family. Requires Zn(2+) as cofactor.

Its subcellular location is the cytoplasm. In terms of biological role, single strand-specific metallo-endoribonuclease involved in late-stage 70S ribosome quality control and in maturation of the 3' terminus of the 16S rRNA. The sequence is that of Endoribonuclease YbeY from Shewanella loihica (strain ATCC BAA-1088 / PV-4).